Reading from the N-terminus, the 219-residue chain is Probable GTP-binding protein EngB (219 aa).

The region spanning 24–207 is the EngB-type G domain; the sequence is VQPEIAFAGR…HELIESWLRP (184 aa). GTP-binding positions include 32–39, 59–63, 81–84, 148–151, and 186–188; these read GRSNAGKS, GRTQH, DLPG, TKCD, and FSA. Positions 39 and 61 each coordinate Mg(2+).

Belongs to the TRAFAC class TrmE-Era-EngA-EngB-Septin-like GTPase superfamily. EngB GTPase family. Mg(2+) serves as cofactor.

Its function is as follows. Necessary for normal cell division and for the maintenance of normal septation. The polypeptide is Probable GTP-binding protein EngB (Burkholderia vietnamiensis (strain G4 / LMG 22486) (Burkholderia cepacia (strain R1808))).